A 290-amino-acid chain; its full sequence is Eukaryotic translation initiation factor 3 subunit G (290 aa).

Disordered regions lie at residues 1-35 and 157-200; these read MSRL…DGTK and ESTG…GERM. The RRM domain occupies 210–288; that stretch reads ATLRVTNVSE…LILRVEFAKR (79 aa).

This sequence belongs to the eIF-3 subunit G family. As to quaternary structure, component of the eukaryotic translation initiation factor 3 (eIF-3) complex.

It localises to the cytoplasm. Its function is as follows. RNA-binding component of the eukaryotic translation initiation factor 3 (eIF-3) complex, which is involved in protein synthesis of a specialized repertoire of mRNAs and, together with other initiation factors, stimulates binding of mRNA and methionyl-tRNAi to the 40S ribosome. The eIF-3 complex specifically targets and initiates translation of a subset of mRNAs involved in cell proliferation. This subunit can bind 18S rRNA. The protein is Eukaryotic translation initiation factor 3 subunit G (tif35) of Aspergillus clavatus (strain ATCC 1007 / CBS 513.65 / DSM 816 / NCTC 3887 / NRRL 1 / QM 1276 / 107).